The following is a 95-amino-acid chain: Small ribosomal subunit protein bS16 (95 aa).

Belongs to the bacterial ribosomal protein bS16 family.

This is Small ribosomal subunit protein bS16 from Thermosipho melanesiensis (strain DSM 12029 / CIP 104789 / BI429).